The sequence spans 566 residues: 5'-AMP-activated protein kinase subunit gamma-2 (566 aa).

Residues 1–198 (MGSAAMDTKK…SRIYASSSPP (198 aa)) are disordered. Residues 15-25 (SSPGGSSGKKN) show a composition bias toward low complexity. The span at 54–64 (NSEKHSSRKVD) shows a compositional bias: basic and acidic residues. Phosphoserine is present on residues S65, S71, S73, S90, S138, S143, S158, S161, and S162. Low complexity-rich tracts occupy residues 132–144 (KESSPNSNPSTSP) and 156–172 (TSSVSSSPSTPTQVTKQ). The residue at position 165 (T165) is a Phosphothreonine. Residues 180-189 (YKQEPERPES) show a composition bias toward basic and acidic residues. S196 bears the Phosphoserine mark. CBS domains lie at 272–332 (PTSS…KSPM), 354–412 (TFKP…MSDM), and 427–489 (IGTY…NLDI). ADP-binding positions include R299, 314 to 319 (MLTITD), V359, 380 to 381 (HR), and K399. Residues R299, 314–319 (MLTITD), V359, H380, 380–381 (HR), K399, T429, A434, 455–456 (SA), 471–474 (SKFD), R498, H527, 527–528 (HR), and 543–546 (SLSD) contribute to the AMP site. ATP is bound by residues R299, 314–319 (MLTITD), V359, 380–381 (HR), R381, and K399. Residues 367-388 (LFDAVYSLIKNKIHRLPVIDPI) carry the AMPK pseudosubstrate motif. ADP contacts are provided by residues 471–474 (SKFD), R498, and 527–528 (HR). ATP is bound by residues 471-474 (SKFD), R498, and 527-528 (HR). Positions 501–559 (YFEGVVKCSKLETLETIVDRIVRAEVHRLVVVNEADSIVGIISLSDILQALILTPAGAK) constitute a CBS 4 domain.

It belongs to the 5'-AMP-activated protein kinase gamma subunit family. In terms of assembly, AMPK is a heterotrimer of an alpha catalytic subunit (PRKAA1 or PRKAA2), a beta (PRKAB1 or PRKAB2) and a gamma non-catalytic subunits (PRKAG1, PRKAG2 or PRKAG3). Interacts with FNIP1 and FNIP2. Post-translationally, phosphorylated by ULK1; leading to negatively regulate AMPK activity and suggesting the existence of a regulatory feedback loop between ULK1 and AMPK. Glycosylated; O-GlcNAcylated by OGT, promoting the AMP-activated protein kinase (AMPK) activity.

In terms of biological role, AMP/ATP-binding subunit of AMP-activated protein kinase (AMPK), an energy sensor protein kinase that plays a key role in regulating cellular energy metabolism. In response to reduction of intracellular ATP levels, AMPK activates energy-producing pathways and inhibits energy-consuming processes: inhibits protein, carbohydrate and lipid biosynthesis, as well as cell growth and proliferation. AMPK acts via direct phosphorylation of metabolic enzymes, and by longer-term effects via phosphorylation of transcription regulators. Also acts as a regulator of cellular polarity by remodeling the actin cytoskeleton; probably by indirectly activating myosin. Gamma non-catalytic subunit mediates binding to AMP, ADP and ATP, leading to activate or inhibit AMPK: AMP-binding results in allosteric activation of alpha catalytic subunit (PRKAA1 or PRKAA2) both by inducing phosphorylation and preventing dephosphorylation of catalytic subunits. ADP also stimulates phosphorylation, without stimulating already phosphorylated catalytic subunit. ATP promotes dephosphorylation of catalytic subunit, rendering the AMPK enzyme inactive. The polypeptide is 5'-AMP-activated protein kinase subunit gamma-2 (Prkag2) (Mus musculus (Mouse)).